The chain runs to 159 residues: Endoribonuclease YbeY (159 aa).

Positions 125, 129, and 135 each coordinate Zn(2+).

The protein belongs to the endoribonuclease YbeY family. It depends on Zn(2+) as a cofactor.

It is found in the cytoplasm. Functionally, single strand-specific metallo-endoribonuclease involved in late-stage 70S ribosome quality control and in maturation of the 3' terminus of the 16S rRNA. The protein is Endoribonuclease YbeY of Limosilactobacillus reuteri (strain DSM 20016) (Lactobacillus reuteri).